The following is a 118-amino-acid chain: Immunoglobulin heavy variable 3-9 (118 aa).

The N-terminal stretch at 1-19 (MELGLSWIFLLAILKGVQC) is a signal peptide. The interval 20–44 (EVQLVESGGGLVQPGRSLRLSCAAS) is framework-1. The 99-residue stretch at 20 to 118 (EVQLVESGGG…DTALYYCAKD (99 aa)) folds into the Ig-like domain. A disulfide bridge connects residues Cys41 and Cys115. The segment at 45 to 52 (GFTFDDYA) is complementarity-determining-1. A framework-2 region spans residues 53-69 (MHWVRQAPGKGLEWVSG). The complementarity-determining-2 stretch occupies residues 70–77 (ISWNSGSI). The framework-3 stretch occupies residues 78–115 (GYADSVKGRFTISRDNAKNSLYLQMNSLRAEDTALYYC). Positions 116 to 118 (AKD) are complementarity-determining-3.

Immunoglobulins are composed of two identical heavy chains and two identical light chains; disulfide-linked.

It localises to the secreted. It is found in the cell membrane. In terms of biological role, v region of the variable domain of immunoglobulin heavy chains that participates in the antigen recognition. Immunoglobulins, also known as antibodies, are membrane-bound or secreted glycoproteins produced by B lymphocytes. In the recognition phase of humoral immunity, the membrane-bound immunoglobulins serve as receptors which, upon binding of a specific antigen, trigger the clonal expansion and differentiation of B lymphocytes into immunoglobulins-secreting plasma cells. Secreted immunoglobulins mediate the effector phase of humoral immunity, which results in the elimination of bound antigens. The antigen binding site is formed by the variable domain of one heavy chain, together with that of its associated light chain. Thus, each immunoglobulin has two antigen binding sites with remarkable affinity for a particular antigen. The variable domains are assembled by a process called V-(D)-J rearrangement and can then be subjected to somatic hypermutations which, after exposure to antigen and selection, allow affinity maturation for a particular antigen. The sequence is that of Immunoglobulin heavy variable 3-9 from Homo sapiens (Human).